Consider the following 236-residue polypeptide: Ribose-5-phosphate isomerase A (236 aa).

Substrate-binding positions include 32–35, 87–90, and 100–103; these read TGST, DGSD, and KGGG. Glu109 functions as the Proton acceptor in the catalytic mechanism. A substrate-binding site is contributed by Lys127.

Belongs to the ribose 5-phosphate isomerase family. As to quaternary structure, homodimer.

It carries out the reaction aldehydo-D-ribose 5-phosphate = D-ribulose 5-phosphate. It participates in carbohydrate degradation; pentose phosphate pathway; D-ribose 5-phosphate from D-ribulose 5-phosphate (non-oxidative stage): step 1/1. Catalyzes the reversible conversion of ribose-5-phosphate to ribulose 5-phosphate. This is Ribose-5-phosphate isomerase A from Haloquadratum walsbyi (strain DSM 16790 / HBSQ001).